A 340-amino-acid polypeptide reads, in one-letter code: tRNA N6-adenosine threonylcarbamoyltransferase (340 aa).

2 residues coordinate Fe cation: H115 and H119. Substrate-binding positions include 138–142 (VVSGG), D171, G184, D188, and N278. Residue D306 participates in Fe cation binding.

It belongs to the KAE1 / TsaD family. Requires Fe(2+) as cofactor.

The protein localises to the cytoplasm. The catalysed reaction is L-threonylcarbamoyladenylate + adenosine(37) in tRNA = N(6)-L-threonylcarbamoyladenosine(37) in tRNA + AMP + H(+). Its function is as follows. Required for the formation of a threonylcarbamoyl group on adenosine at position 37 (t(6)A37) in tRNAs that read codons beginning with adenine. Is involved in the transfer of the threonylcarbamoyl moiety of threonylcarbamoyl-AMP (TC-AMP) to the N6 group of A37, together with TsaE and TsaB. TsaD likely plays a direct catalytic role in this reaction. The sequence is that of tRNA N6-adenosine threonylcarbamoyltransferase from Clostridium botulinum (strain 657 / Type Ba4).